A 214-amino-acid chain; its full sequence is MKFFIDTANVEEIKKVAKWGVLDGVTTNPTLIAREGRDLKEVIEEICSIVDGPISAEVISLESEKMVEEAKELIKIHKNIVIKVPMCEEGLKAVSELTKLGIKTNVTLIFSAQQALLAAKAGATYVSPFLGRIDDIGSFGIQLVEDIVTIFTNFGIESEIICASIRTPIHVLECARVGGDIATVPYKVFAQMLKHPLTDRGIEQFLEDYKSMNK.

Lys-83 (schiff-base intermediate with substrate) is an active-site residue.

It belongs to the transaldolase family. Type 3B subfamily.

Its subcellular location is the cytoplasm. The enzyme catalyses D-sedoheptulose 7-phosphate + D-glyceraldehyde 3-phosphate = D-erythrose 4-phosphate + beta-D-fructose 6-phosphate. The protein operates within carbohydrate degradation; pentose phosphate pathway; D-glyceraldehyde 3-phosphate and beta-D-fructose 6-phosphate from D-ribose 5-phosphate and D-xylulose 5-phosphate (non-oxidative stage): step 2/3. Transaldolase is important for the balance of metabolites in the pentose-phosphate pathway. The chain is Probable transaldolase from Clostridium tetani (strain Massachusetts / E88).